The primary structure comprises 379 residues: Cytochrome b (379 aa).

4 helical membrane-spanning segments follow: residues 33-53 (FGSLLGICLILQIITGLFLAM), 77-98 (WMIRYMHANGASMFFICLFIHI), 113-133 (WNIGVILLFTTMATAFMGYVL), and 178-198 (FFAFHFILPFIIMALAAVHLL). The heme b site is built by histidine 83 and histidine 97. Residues histidine 182 and histidine 196 each contribute to the heme b site. Residue histidine 201 participates in a ubiquinone binding. Helical transmembrane passes span 226-246 (MKDIMGFLTMFLALLTLVLFY), 288-308 (LGGVVALMLSILILIFLPMMH), 320-340 (LSQCMFWILVANLLTLTWIGG), and 347-367 (FIMIGQLASLSYFLIILIIMP).

Belongs to the cytochrome b family. In terms of assembly, the cytochrome bc1 complex contains 11 subunits: 3 respiratory subunits (MT-CYB, CYC1 and UQCRFS1), 2 core proteins (UQCRC1 and UQCRC2) and 6 low-molecular weight proteins (UQCRH/QCR6, UQCRB/QCR7, UQCRQ/QCR8, UQCR10/QCR9, UQCR11/QCR10 and a cleavage product of UQCRFS1). This cytochrome bc1 complex then forms a dimer. The cofactor is heme b.

The protein resides in the mitochondrion inner membrane. Its function is as follows. Component of the ubiquinol-cytochrome c reductase complex (complex III or cytochrome b-c1 complex) that is part of the mitochondrial respiratory chain. The b-c1 complex mediates electron transfer from ubiquinol to cytochrome c. Contributes to the generation of a proton gradient across the mitochondrial membrane that is then used for ATP synthesis. This is Cytochrome b (MT-CYB) from Massoutiera mzabi (Mzab gundi).